The sequence spans 809 residues: Zygotic DNA replication licensing factor mcm3 (809 aa).

One can recognise an MCM domain in the interval 297–504 (IFEQLSRSLA…QDREISDHVL (208 aa)). Residue 347-354 (GDPSVAKS) participates in ATP binding. An Arginine finger motif is present at residues 479–482 (SRFD). The disordered stretch occupies residues 664 to 741 (KKRRRRDEDS…TDSSAKPGLS (78 aa)). Positions 696–705 (AQEGESHDPY) are enriched in basic and acidic residues.

Belongs to the MCM family. In terms of assembly, component of the mcm2-7 complex (RLF-M). The complex forms a toroidal hexameric ring with the proposed subunit order mcm2-mcm6-mcm4-mcm7-mcm3-mcm5. Component of the CMG helicase complex, composed of the mcm2-7 complex, the GINS complex and cdc45.

The protein resides in the nucleus. The protein localises to the chromosome. The catalysed reaction is ATP + H2O = ADP + phosphate + H(+). Acts as a component of the MCM2-7 complex (MCM complex) which is the putative replicative helicase essential for 'once per cell cycle' DNA replication initiation and elongation in eukaryotic cells. The active ATPase sites in the MCM2-7 ring are formed through the interaction surfaces of two neighboring subunits such that a critical structure of a conserved arginine finger motif is provided in trans relative to the ATP-binding site of the Walker A box of the adjacent subunit. The six ATPase active sites, however, are likely to contribute differentially to the complex helicase activity. The existence of maternal and zygotic forms of mcm3 and mcm6 suggests that specific forms of mcm2-7 complexes may be used during different stages of development. In Xenopus tropicalis (Western clawed frog), this protein is Zygotic DNA replication licensing factor mcm3 (zmcm3).